Reading from the N-terminus, the 62-residue chain is Toxin Tb2-II (62 aa).

The LCN-type CS-alpha/beta domain occupies 1–62 (KEGYAMDHEG…KVWDYATNKC (62 aa)). 4 disulfides stabilise this stretch: C11–C62, C15–C38, C23–C43, and C27–C45.

It belongs to the long (4 C-C) scorpion toxin superfamily. Sodium channel inhibitor family. Beta subfamily. In terms of tissue distribution, expressed by the venom gland.

It localises to the secreted. Its function is as follows. Beta toxins bind voltage-independently at site-4 of sodium channels (Nav) and shift the voltage of activation toward more negative potentials thereby affecting sodium channel activation and promoting spontaneous and repetitive firing. This toxin is active against both mammals and insects. The chain is Toxin Tb2-II from Tityus bahiensis (Brazilian scorpion).